Consider the following 45-residue polypeptide: uncharacterized protein (45 aa).

A signal peptide spans 1–19 (MTFQILFLFVFHFVYIFRA).

This is an uncharacterized protein from Saccharomyces cerevisiae (strain ATCC 204508 / S288c) (Baker's yeast).